We begin with the raw amino-acid sequence, 369 residues long: Uroporphyrinogen decarboxylase (369 aa).

Substrate contacts are provided by residues 28–32 (RQAGR), D78, Y154, S209, and H339.

It belongs to the uroporphyrinogen decarboxylase family. Homodimer.

It localises to the cytoplasm. The catalysed reaction is uroporphyrinogen III + 4 H(+) = coproporphyrinogen III + 4 CO2. Its pathway is porphyrin-containing compound metabolism; protoporphyrin-IX biosynthesis; coproporphyrinogen-III from 5-aminolevulinate: step 4/4. Functionally, catalyzes the decarboxylation of four acetate groups of uroporphyrinogen-III to yield coproporphyrinogen-III. The chain is Uroporphyrinogen decarboxylase from Polaromonas sp. (strain JS666 / ATCC BAA-500).